A 383-amino-acid polypeptide reads, in one-letter code: Adaptive-response sensory kinase SasA (383 aa).

Residues 161-383 (MLAHDLRSPL…SFHFTLPVYR (223 aa)) form the Histidine kinase domain. Histidine 164 bears the Phosphohistidine; by autocatalysis mark.

As to quaternary structure, homooligomerizes. Interacts with KaiC1. Interacts with KaiC1 and RpaA. Binds to the B-loop in the CI domain of KaiC; SasA and KaiB compete to bind to the CI domain.

The catalysed reaction is ATP + protein L-histidine = ADP + protein N-phospho-L-histidine.. In terms of biological role, member of the two-component regulatory system SasA/RpaA involved in genome-wide circadian gene expression. One of several clock output pathways. Participates in the Kai clock protein complex, the main circadian regulator in cyanobacteria, via its interaction with KaiC. KaiC enhances the autophosphorylation activity of SasA, which then transfers its phosphate group to RpaA to activate it. In addition to its output function, recruits fold-shifted KaiB (KaiB(fs)) to KaiC to cooperatively form the KaiB(6):KaiC(6) complex (independent of SasA kinase activity). Required for robustness of the circadian rhythm of gene expression and is involved in clock output, also required for adaptation to light/dark cycles. Its function is as follows. Plays an important role in glucose metabolism, important for expression of genes involved in glycolysis, gluconeogenesis, the oxidative pentose phosphate pathway, and glycogen metabolism. Required for heterotrophic growth. Overexpression from the psbAII promoter leads to altered levels of genes involved in carbon metabolism, increased levels of transcripts for clock oscillator genes in the light and the dark, complete loss of glycogen accumulation, decreased levels of metabolites of sugar catabolism and increased levels of amino acids in the light and increased levels of SigE protein. This chain is Adaptive-response sensory kinase SasA, found in Synechocystis sp. (strain ATCC 27184 / PCC 6803 / Kazusa).